A 302-amino-acid polypeptide reads, in one-letter code: tRNA dimethylallyltransferase (302 aa).

10–17 (GPTATGKS) is an ATP binding site. Substrate is bound at residue 12-17 (TATGKS). The interval 35 to 38 (DSRQ) is interaction with substrate tRNA.

It belongs to the IPP transferase family. Monomer. The cofactor is Mg(2+).

The enzyme catalyses adenosine(37) in tRNA + dimethylallyl diphosphate = N(6)-dimethylallyladenosine(37) in tRNA + diphosphate. Catalyzes the transfer of a dimethylallyl group onto the adenine at position 37 in tRNAs that read codons beginning with uridine, leading to the formation of N6-(dimethylallyl)adenosine (i(6)A). The chain is tRNA dimethylallyltransferase from Acaryochloris marina (strain MBIC 11017).